A 265-amino-acid chain; its full sequence is Proteasome subunit alpha (265 aa).

The disordered stretch occupies residues 236-265; that stretch reads EKDSKGSKGAQNPKGARDSKNSKSYGESTD.

It belongs to the peptidase T1A family. In terms of assembly, the 20S proteasome core is composed of 14 alpha and 14 beta subunits that assemble into four stacked heptameric rings, resulting in a barrel-shaped structure. The two inner rings, each composed of seven catalytic beta subunits, are sandwiched by two outer rings, each composed of seven alpha subunits. The catalytic chamber with the active sites is on the inside of the barrel. Has a gated structure, the ends of the cylinder being occluded by the N-termini of the alpha-subunits. Is capped by the proteasome-associated ATPase, ARC.

Its subcellular location is the cytoplasm. It functions in the pathway protein degradation; proteasomal Pup-dependent pathway. Its activity is regulated as follows. The formation of the proteasomal ATPase ARC-20S proteasome complex, likely via the docking of the C-termini of ARC into the intersubunit pockets in the alpha-rings, may trigger opening of the gate for substrate entry. Interconversion between the open-gate and close-gate conformations leads to a dynamic regulation of the 20S proteasome proteolysis activity. In terms of biological role, component of the proteasome core, a large protease complex with broad specificity involved in protein degradation. This Mycobacterium leprae (strain Br4923) protein is Proteasome subunit alpha.